The following is a 253-amino-acid chain: Indole-3-glycerol phosphate synthase (253 aa).

The protein belongs to the TrpC family.

It catalyses the reaction 1-(2-carboxyphenylamino)-1-deoxy-D-ribulose 5-phosphate + H(+) = (1S,2R)-1-C-(indol-3-yl)glycerol 3-phosphate + CO2 + H2O. Its pathway is amino-acid biosynthesis; L-tryptophan biosynthesis; L-tryptophan from chorismate: step 4/5. In Bacillus cereus (strain ATCC 14579 / DSM 31 / CCUG 7414 / JCM 2152 / NBRC 15305 / NCIMB 9373 / NCTC 2599 / NRRL B-3711), this protein is Indole-3-glycerol phosphate synthase.